The primary structure comprises 211 residues: tRNA (guanine-N(7)-)-methyltransferase (211 aa).

S-adenosyl-L-methionine is bound by residues glutamate 43, glutamate 68, aspartate 95, and aspartate 117. Aspartate 117 is an active-site residue. Substrate is bound by residues lysine 121, aspartate 153, and 190-193 (TEYE).

The protein belongs to the class I-like SAM-binding methyltransferase superfamily. TrmB family.

The catalysed reaction is guanosine(46) in tRNA + S-adenosyl-L-methionine = N(7)-methylguanosine(46) in tRNA + S-adenosyl-L-homocysteine. The protein operates within tRNA modification; N(7)-methylguanine-tRNA biosynthesis. In terms of biological role, catalyzes the formation of N(7)-methylguanine at position 46 (m7G46) in tRNA. The protein is tRNA (guanine-N(7)-)-methyltransferase of Staphylococcus carnosus (strain TM300).